The primary structure comprises 785 residues: MLVTAFILWASLLTGAWPATPIQDQLPATPRVRLSFKELKATGTAHFFNFLLNTTDYRILLKDEDHDRMYVGSKDYVLSLDLHDINREPLIIHWAASPQRIEECILSGKDGNGECGNFVRLIQPWNRTHLYVCGTGAYNPMCTYVNRGRRAQALPWTQMQVVRGRGSRATDGADRPTPTAPRQDYIFYLEPEKLESGKGKCPYDPKLDTASALINEELYAGVYIDFMGTDAAIFRTLGKQTAMRTDQYNSRWLNDPSFIHAELIPDSAERNDDKLYFFFRERSAEAPQNPAVYARIGRICLNDDGGHCCLVNKWSTFLKARLVCSVPGEDGIETHFDELQDVFVQQTQDVRNPVIYAVFTSSGSVFRGSAVCVYSMADIRMVFNGPFAHKEGPNYQWMPFSGKMPYPRPGTCPGGTFTPSMKSTKDYPDEVINFMRTHPLMYQAVYPLQRRPLVVRTGAPYRLTTVAVDQVDAADGRYEVLFLGTDRGTVQKVIVLPKDDQEVEELMLEEVEVFKEPAPVKTMTISSKRQQLYVASAVGVTHLSLHRCQAYGAACADCCLARDPYCAWDGQACSRYTASSKRRSRRQDVRHGNPIRQCRGFNSNANKNAVESVQYGVAGSAAFLECQPRSPQATVKWLFQRDPSDRRREIRAEDRFLRTEQGLLLRALQLGDRGLYSCTATENNFKHIVTRVQLHVLGRDAVHAALFPPLAVSVPPPPGTGPPTPPYQELAQLLAQPEVGLIHQYCQGYWRHVPPRPREAPGALRPPELQDQKKPRNRRHHPPDT.

An N-terminal signal peptide occupies residues 1–18; the sequence is MLVTAFILWASLLTGAWP. A Sema domain is found at 31 to 545; that stretch reads RVRLSFKELK…SAVGVTHLSL (515 aa). N53 carries an N-linked (GlcNAc...) asparagine glycan. A disulfide bond links C104 and C115. N126 carries an N-linked (GlcNAc...) asparagine glycan. Cystine bridges form between C133-C142, C300-C412, C324-C372, and C548-C566. The tract at residues 583-602 is disordered; that stretch reads RSRRQDVRHGNPIRQCRGFN. The region spanning 605-695 is the Ig-like C2-type domain; that stretch reads ANKNAVESVQ…KHIVTRVQLH (91 aa). C678 and C746 form a disulfide bridge. A disordered region spans residues 753–785; the sequence is VPPRPREAPGALRPPELQDQKKPRNRRHHPPDT. The span at 775–785 shows a compositional bias: basic residues; the sequence is PRNRRHHPPDT.

Belongs to the semaphorin family. In terms of tissue distribution, expressed ubiquitously in adulthood. During embryogenesis, expressed in subregions of the central nervous system and various other tissues like skin, kidney, lung and intestine.

The protein resides in the secreted. The sequence is that of Semaphorin-3F (Sema3f) from Mus musculus (Mouse).